The chain runs to 333 residues: Tetraacyldisaccharide 4'-kinase (333 aa).

60–67 serves as a coordination point for ATP; that stretch reads TVGGTGKT.

It belongs to the LpxK family.

The catalysed reaction is a lipid A disaccharide + ATP = a lipid IVA + ADP + H(+). It functions in the pathway glycolipid biosynthesis; lipid IV(A) biosynthesis; lipid IV(A) from (3R)-3-hydroxytetradecanoyl-[acyl-carrier-protein] and UDP-N-acetyl-alpha-D-glucosamine: step 6/6. Transfers the gamma-phosphate of ATP to the 4'-position of a tetraacyldisaccharide 1-phosphate intermediate (termed DS-1-P) to form tetraacyldisaccharide 1,4'-bis-phosphate (lipid IVA). The sequence is that of Tetraacyldisaccharide 4'-kinase from Ectopseudomonas mendocina (strain ymp) (Pseudomonas mendocina).